We begin with the raw amino-acid sequence, 425 residues long: UPF0597 protein KPN78578_43500 (425 aa).

This sequence belongs to the UPF0597 family.

The sequence is that of UPF0597 protein KPN78578_43500 from Klebsiella pneumoniae subsp. pneumoniae (strain ATCC 700721 / MGH 78578).